Consider the following 570-residue polypeptide: Interleukin-1 receptor accessory protein (570 aa).

Positions 1 to 20 (MTLLWCVVSLYFYGILQSDA) are cleaved as a signal peptide. Ig-like C2-type domains lie at 21-128 (SERC…VAFP), 141-230 (PMKL…RTLT), and 242-348 (PPVI…AKVK). Residues 21 to 367 (SERCDDWGLD…VELACGFGAT (347 aa)) are Extracellular-facing. Disulfide bonds link Cys-24-Cys-122, Cys-47-Cys-114, Cys-137-Cys-181, Cys-160-Cys-212, and Cys-266-Cys-332. N-linked (GlcNAc...) asparagine glycosylation occurs at Asn-57. Residues 69–85 (IWYWTRQDRDLEEPINF) are essential for interaction with PTPRD. N-linked (GlcNAc...) asparagine glycosylation is found at Asn-107, Asn-111, and Asn-118. 3 N-linked (GlcNAc...) asparagine glycosylation sites follow: Asn-196, Asn-209, and Asn-299. The helical transmembrane segment at 368–388 (VLLVVILIVVYHVYWLEMVLF) threads the bilayer. Topologically, residues 389 to 570 (YRAHFGTDET…GLSYSSLKNV (182 aa)) are cytoplasmic. Residues 403-546 (KEYDIYVSYA…RFWKQLQVAM (144 aa)) enclose the TIR domain. Glu-482 is an active-site residue. The segment at 549 to 570 (KKSPRRSSSDEQGLSYSSLKNV) is disordered. Ser-557 is modified (phosphoserine). Residues 558–570 (DEQGLSYSSLKNV) show a composition bias toward polar residues.

This sequence belongs to the interleukin-1 receptor family. The interleukin-36 receptor complex is a heterodimer of IL1RL2 and IL1RAP; the association is inhibited by IL36RN. The interleukin-1 receptor complex is a heterodimer of IL1R1 and IL1RAP. Associates with IL1R2 to form a non-signaling interleukin-1 receptor complex. Isoform 4 interacts with IL1R1 in an interleukin-1-dependent manner. Interacts with IL-33-bound IL1RL1 to form the minimal interleukin-33 signaling complex with a 1:1:1 stoichiometry. Interacts with KIT (independently of stimulation with KITLG/SCF). A mast cell-specific KITLG/SCF-induced interleukin-33 signaling complex contains IL1RL1, IL1RAP, KIT and MYD88. Interacts (via the first immunoglobilin domain) with PTPRD (via the third immunoglobilin domain); induces pre- and postsynaptic differentiation of neurons. Detected in liver, skin, placenta, thymus and lung. Isoform 4 is predominantly expressed in brain. Overexpressed on candidate chronic myeloid leukemia (CML) stem cells, hematopoietic stem cells and mononuclear cells of patients with acute myeloid leukemia (AML). Overexpressed in patients with chronic obstructive pulmonary disease (COPD). Expressed in T-helper 1 (Th1) and T-helper 2 (Th2) cell subsets.

It is found in the cell membrane. The protein resides in the secreted. The enzyme catalyses NAD(+) + H2O = ADP-D-ribose + nicotinamide + H(+). Its function is as follows. Coreceptor for IL1RL2 in the IL-36 signaling system. Coreceptor with IL1R1 in the IL-1 signaling system. Associates with IL1R1 bound to IL1B to form the high affinity interleukin-1 receptor complex which mediates interleukin-1-dependent activation of NF-kappa-B and other pathways. Signaling involves the recruitment of adapter molecules such as TOLLIP, MYD88, and IRAK1 or IRAK2 via the respective TIR domains of the receptor/coreceptor subunits. Recruits TOLLIP to the signaling complex. Does not bind to interleukin-1 alone; binding of IL1RN to IL1R1, prevents its association with IL1R1 to form a signaling complex. The cellular response is modulated through a non-signaling association with the membrane IL1R2 decoy receptor. Coreceptor for IL1RL1 in the IL-33 signaling system. Can bidirectionally induce pre- and postsynaptic differentiation of neurons by trans-synaptically binding to PTPRD. May play a role in IL1B-mediated costimulation of IFNG production from T-helper 1 (Th1) cells. In terms of biological role, associates with secreted ligand-bound IL1R2 and increases the affinity of secreted IL1R2 for IL1B; this complex formation may be the dominant mechanism for neutralization of IL1B by secreted/soluble receptors. Enhances the ability of secreted IL1R1 to inhibit IL-33 signaling. Unable to mediate canonical IL-1 signaling. Required for Src phosphorylation by IL1B. May be involved in IL1B-potentiated NMDA-induced calcium influx in neurons. The polypeptide is Interleukin-1 receptor accessory protein (IL1RAP) (Homo sapiens (Human)).